The chain runs to 314 residues: Probable cell division protein WhiA (314 aa).

Positions 274 to 308 (SLKELGEMISTGPISKSGVNHRLRKLNELADKIRS) form a DNA-binding region, H-T-H motif.

It belongs to the WhiA family.

Involved in cell division and chromosome segregation. In Staphylococcus haemolyticus (strain JCSC1435), this protein is Probable cell division protein WhiA.